Here is a 365-residue protein sequence, read N- to C-terminus: tRNA-specific 2-thiouridylase MnmA (365 aa).

Residues 14–21 (AMSGGVDS) and leucine 40 contribute to the ATP site. Cysteine 108 (nucleophile) is an active-site residue. Cysteine 108 and cysteine 204 are joined by a disulfide. Glycine 132 contributes to the ATP binding site. Positions 154 to 156 (KDQ) are interaction with tRNA. The active-site Cysteine persulfide intermediate is cysteine 204.

This sequence belongs to the MnmA/TRMU family.

It is found in the cytoplasm. The enzyme catalyses S-sulfanyl-L-cysteinyl-[protein] + uridine(34) in tRNA + AH2 + ATP = 2-thiouridine(34) in tRNA + L-cysteinyl-[protein] + A + AMP + diphosphate + H(+). Its function is as follows. Catalyzes the 2-thiolation of uridine at the wobble position (U34) of tRNA, leading to the formation of s(2)U34. In Rickettsia akari (strain Hartford), this protein is tRNA-specific 2-thiouridylase MnmA.